The primary structure comprises 395 residues: MVQEFNVLRCFSCQTFQVQQVKKAKKWTCKVCGEKQSLIKEFGRGAAADCRRHVQKLNALRGEQHQLNTQQLLAQGDEENENEDVYEVLDPKSEQEEAHVSRWSKYTDQTTEGPNEEKDDEDEDENVYTERPQFRIQGTRKRKKMSSLEPFGGNCDNYEESRAGYSQFRKQAYLPLQLEKRSSSSWNKGSVSKYSNCQRPDDVVPSARTKLPSSRQTVGHYPTACSSSTNTMENSIGNKQQIKSSYRPPTADVNKHLPIQSESPSVSSHQKFGESTIENKDSKWNKFLTIVPTQDKEEYYYESQNGKKTLIPYFTKADTVVDFEERRCPADEKDSGILNRQKVVGGNASCPTTRLPTKSVGFENAVCKPVLVKAPYSSLSLNPLFCTDEDFDDTS.

Residues 90 to 100 are compositionally biased toward basic and acidic residues; that stretch reads DPKSEQEEAHV. Disordered regions lie at residues 90 to 155 and 180 to 275; these read DPKS…GGNC and KRSS…FGES. Polar residues predominate over residues 104-113; that stretch reads SKYTDQTTEG. The span at 117 to 127 shows a compositional bias: acidic residues; sequence EKDDEDEDENV. The Nuclear localization signal (NLS) motif lies at 142-145; that stretch reads RKKM. Low complexity predominate over residues 183 to 195; it reads SSSWNKGSVSKYS. Composition is skewed to polar residues over residues 224 to 244 and 260 to 270; these read ACSS…QIKS and QSESPSVSSHQ.

The protein belongs to the MRNIP family.

The protein localises to the nucleus. It is found in the nucleoplasm. In terms of biological role, plays a role in the cellular response to DNA damage and the maintenance of genome stability through its association with the MRN damage-sensing complex. Promotes chromatin loading and activity of the MRN complex to facilitate subsequent ATM-mediated DNA damage response signaling and DNA repair. This is MRN complex-interacting protein from Danio rerio (Zebrafish).